Here is a 319-residue protein sequence, read N- to C-terminus: Probable arabinan endo-1,5-alpha-L-arabinosidase A (319 aa).

The signal sequence occupies residues 1–19; the sequence is MYLQSSLALVLLRAAVVHG. Aspartate 34 (proton acceptor) is an active-site residue. Asparagine 53 carries N-linked (GlcNAc...) asparagine glycosylation. Glutamate 198 serves as the catalytic Proton donor.

The protein belongs to the glycosyl hydrolase 43 family.

It localises to the secreted. It carries out the reaction Endohydrolysis of (1-&gt;5)-alpha-arabinofuranosidic linkages in (1-&gt;5)-arabinans.. The protein operates within glycan metabolism; L-arabinan degradation. In terms of biological role, endo-1,5-alpha-L-arabinanase involved in degradation of pectin. Its preferred substrate is linear 1,5-alpha-L-arabinan. The chain is Probable arabinan endo-1,5-alpha-L-arabinosidase A (abnA) from Aspergillus flavus (strain ATCC 200026 / FGSC A1120 / IAM 13836 / NRRL 3357 / JCM 12722 / SRRC 167).